A 354-amino-acid polypeptide reads, in one-letter code: Uroporphyrinogen decarboxylase (354 aa).

Residues arginine 28 to arginine 32, aspartate 78, tyrosine 155, serine 210, and histidine 325 each bind substrate.

Belongs to the uroporphyrinogen decarboxylase family. As to quaternary structure, homodimer.

The protein resides in the cytoplasm. The catalysed reaction is uroporphyrinogen III + 4 H(+) = coproporphyrinogen III + 4 CO2. It functions in the pathway porphyrin-containing compound metabolism; protoporphyrin-IX biosynthesis; coproporphyrinogen-III from 5-aminolevulinate: step 4/4. Its function is as follows. Catalyzes the decarboxylation of four acetate groups of uroporphyrinogen-III to yield coproporphyrinogen-III. The polypeptide is Uroporphyrinogen decarboxylase (Crocosphaera subtropica (strain ATCC 51142 / BH68) (Cyanothece sp. (strain ATCC 51142))).